The sequence spans 236 residues: Ribose-5-phosphate isomerase A (236 aa).

Residues 31-34 (TGST), 88-91 (DGAD), and 101-104 (KGGG) each bind substrate. E110 serves as the catalytic Proton acceptor. Residue K128 participates in substrate binding.

The protein belongs to the ribose 5-phosphate isomerase family. As to quaternary structure, homodimer.

The catalysed reaction is aldehydo-D-ribose 5-phosphate = D-ribulose 5-phosphate. It participates in carbohydrate degradation; pentose phosphate pathway; D-ribose 5-phosphate from D-ribulose 5-phosphate (non-oxidative stage): step 1/1. Its function is as follows. Catalyzes the reversible conversion of ribose-5-phosphate to ribulose 5-phosphate. The protein is Ribose-5-phosphate isomerase A of Thermosynechococcus vestitus (strain NIES-2133 / IAM M-273 / BP-1).